Here is a 69-residue protein sequence, read N- to C-terminus: Probable Sec-independent protein translocase protein TatE (69 aa).

Residues 1 to 21 (MEGISIAKLLVIGALIVLLFG) form a helical membrane-spanning segment. The segment at 45 to 69 (DDQPAAKSSAQDEHPAAISETRPKE) is disordered. Positions 54–69 (AQDEHPAAISETRPKE) are enriched in basic and acidic residues.

This sequence belongs to the TatA/E family. TatE subfamily.

Its subcellular location is the cell inner membrane. Part of the twin-arginine translocation (Tat) system that transports large folded proteins containing a characteristic twin-arginine motif in their signal peptide across membranes. TatE shares overlapping functions with TatA. The sequence is that of Probable Sec-independent protein translocase protein TatE from Dickeya chrysanthemi (strain Ech1591) (Dickeya zeae (strain Ech1591)).